Here is a 288-residue protein sequence, read N- to C-terminus: 4-diphosphocytidyl-2-C-methyl-D-erythritol kinase (288 aa).

Residue Lys-8 is part of the active site. Residue 92–102 (PVAAGMAGGST) coordinates ATP. Residue Asp-134 is part of the active site.

This sequence belongs to the GHMP kinase family. IspE subfamily.

The catalysed reaction is 4-CDP-2-C-methyl-D-erythritol + ATP = 4-CDP-2-C-methyl-D-erythritol 2-phosphate + ADP + H(+). Its pathway is isoprenoid biosynthesis; isopentenyl diphosphate biosynthesis via DXP pathway; isopentenyl diphosphate from 1-deoxy-D-xylulose 5-phosphate: step 3/6. Its function is as follows. Catalyzes the phosphorylation of the position 2 hydroxy group of 4-diphosphocytidyl-2C-methyl-D-erythritol. This Clostridium perfringens (strain 13 / Type A) protein is 4-diphosphocytidyl-2-C-methyl-D-erythritol kinase.